The following is a 168-amino-acid chain: Cell division inhibitor SulA (168 aa).

A ftsZ binding region spans residues 105–111 (ALLTGNY). The tract at residues 161 to 168 (KIHSTLYH) is lon protease binding.

The protein belongs to the SulA family. Interacts with FtsZ. Is rapidly cleaved and degraded by the Lon protease once DNA damage is repaired.

Component of the SOS system and an inhibitor of cell division. Accumulation of SulA causes rapid cessation of cell division and the appearance of long, non-septate filaments. In the presence of GTP, binds a polymerization-competent form of FtsZ in a 1:1 ratio, thus inhibiting FtsZ polymerization and therefore preventing it from participating in the assembly of the Z ring. This mechanism prevents the premature segregation of damaged DNA to daughter cells during cell division. The chain is Cell division inhibitor SulA from Pectobacterium carotovorum subsp. carotovorum (strain PC1).